A 252-amino-acid chain; its full sequence is 3-deoxy-manno-octulosonate cytidylyltransferase 2 (252 aa).

The protein belongs to the KdsB family.

It is found in the cytoplasm. It carries out the reaction 3-deoxy-alpha-D-manno-oct-2-ulosonate + CTP = CMP-3-deoxy-beta-D-manno-octulosonate + diphosphate. The protein operates within nucleotide-sugar biosynthesis; CMP-3-deoxy-D-manno-octulosonate biosynthesis; CMP-3-deoxy-D-manno-octulosonate from 3-deoxy-D-manno-octulosonate and CTP: step 1/1. Its pathway is bacterial outer membrane biogenesis; lipopolysaccharide biosynthesis. Its function is as follows. Activates KDO (a required 8-carbon sugar) for incorporation into bacterial lipopolysaccharide in Gram-negative bacteria. In Actinobacillus pleuropneumoniae serotype 5b (strain L20), this protein is 3-deoxy-manno-octulosonate cytidylyltransferase 2.